Here is an 854-residue protein sequence, read N- to C-terminus: Nucleolar MIF4G domain-containing protein 1 (854 aa).

The interval 2–275 (PRNVPEVNGV…EEDPDWQVLQ (274 aa)) is necessary for nucleolar localization and for targeting PPP1CA to the nucleolus. S60 bears the Phosphoserine mark. Disordered regions lie at residues 66–215 (ESRS…PLSF) and 231–333 (SGGG…GEKY). Basic residues predominate over residues 76-99 (PGGRKSRKELRKEKRHLRKARRLQ). Residues 104–113 (SGSGDQGGNV) are compositionally biased toward gly residues. Over residues 128–173 (VRPTPAKATATPAKASAPSTNTKASAAQPKAKAKGAPGKPGPATAT) the composition is skewed to low complexity. Positions 188 to 197 (REIRKLERCL) are enriched in basic and acidic residues. Residues 265 to 280 (SEEDPDWQVLQEDQED) are compositionally biased toward acidic residues. Composition is skewed to basic and acidic residues over residues 281–291 (VNSKRRGEAES), 303–315 (RFAE…RSSS), and 322–331 (QESHSVESGE). The Required for efficient binding to PPP1CA and for targeting PPP1CA to the nucleolus signature appears at 301–304 (KVRF). Phosphoserine is present on residues S311, S314, and S315. An MIF4G domain is found at 356–553 (KKHVKGLINR…ETMLALKNND (198 aa)). Residues 648–764 (DVRRIIFCTL…PLSVLKVVEF (117 aa)) enclose the MI domain.

Belongs to the CWC22 family. As to quaternary structure, may interact with EIF4A1, EIF4A2 and EIF4A3. Interacts with PPP1CA and PPP1CC.

The protein resides in the nucleus. It is found in the nucleolus. Plays a role in targeting PPP1CA to the nucleolus. The polypeptide is Nucleolar MIF4G domain-containing protein 1 (Nom1) (Mus musculus (Mouse)).